The primary structure comprises 347 residues: Lipoyl synthase (347 aa).

Residues C55, C60, C66, C81, C85, C88, and S292 each contribute to the [4Fe-4S] cluster site. The 215-residue stretch at 67–281 folds into the Radical SAM core domain; it reads WEDREATFLI…RDYGHDIGFA (215 aa).

This sequence belongs to the radical SAM superfamily. Lipoyl synthase family. It depends on [4Fe-4S] cluster as a cofactor.

The protein resides in the cytoplasm. The catalysed reaction is [[Fe-S] cluster scaffold protein carrying a second [4Fe-4S](2+) cluster] + N(6)-octanoyl-L-lysyl-[protein] + 2 oxidized [2Fe-2S]-[ferredoxin] + 2 S-adenosyl-L-methionine + 4 H(+) = [[Fe-S] cluster scaffold protein] + N(6)-[(R)-dihydrolipoyl]-L-lysyl-[protein] + 4 Fe(3+) + 2 hydrogen sulfide + 2 5'-deoxyadenosine + 2 L-methionine + 2 reduced [2Fe-2S]-[ferredoxin]. Its pathway is protein modification; protein lipoylation via endogenous pathway; protein N(6)-(lipoyl)lysine from octanoyl-[acyl-carrier-protein]: step 2/2. Its function is as follows. Catalyzes the radical-mediated insertion of two sulfur atoms into the C-6 and C-8 positions of the octanoyl moiety bound to the lipoyl domains of lipoate-dependent enzymes, thereby converting the octanoylated domains into lipoylated derivatives. The chain is Lipoyl synthase from Corynebacterium kroppenstedtii (strain DSM 44385 / JCM 11950 / CIP 105744 / CCUG 35717).